The following is a 96-amino-acid chain: Large ribosomal subunit protein eL21 (96 aa).

The protein belongs to the eukaryotic ribosomal protein eL21 family.

This Methanosphaerula palustris (strain ATCC BAA-1556 / DSM 19958 / E1-9c) protein is Large ribosomal subunit protein eL21.